Consider the following 199-residue polypeptide: Probable GTP-binding protein EngB (199 aa).

An EngB-type G domain is found at 28–199; it reads DLPEIALAGR…DSWDAILEQV (172 aa). GTP-binding positions include 36–43, 63–67, 81–84, 148–151, and 180–182; these read GRSNVGKS, GKTQL, DVPG, TKAD, and FSS. The Mg(2+) site is built by serine 43 and threonine 65.

It belongs to the TRAFAC class TrmE-Era-EngA-EngB-Septin-like GTPase superfamily. EngB GTPase family. The cofactor is Mg(2+).

Necessary for normal cell division and for the maintenance of normal septation. This chain is Probable GTP-binding protein EngB, found in Streptococcus pyogenes serotype M3 (strain SSI-1).